A 344-amino-acid polypeptide reads, in one-letter code: L-rhamnose-proton symporter (344 aa).

10 helical membrane-spanning segments follow: residues 4–24 (AITMGIFWHLIGAASAACFYA), 38–58 (WSVGGIVSWIILPWAISALLL), 68–88 (FSLSTLLPVFLFGAMWGIGNI), 101–121 (MGIGIAIGITLIVGTLMTPII), 137–157 (TLLGVLVALIGVGIVTRAGQL), 175–195 (LVLAVMCGIFSAGMSFAMNAA), 214–234 (LPSYVIIMGGGAIINLGFCFI), 259–279 (VLLSALGGLMWYLQFFFYAWG), 290–310 (ISWMLHMSFYVLCGGIVGLVL), and 323–343 (VLSLGCVVIIVAANIVGIGMA).

Belongs to the L-rhamnose transporter (TC 2.A.7.6) family.

The protein resides in the cell inner membrane. The enzyme catalyses L-rhamnopyranose(in) + H(+)(in) = L-rhamnopyranose(out) + H(+)(out). Uptake of L-rhamnose across the cytoplasmic membrane with the concomitant transport of protons into the cell (symport system). This is L-rhamnose-proton symporter from Shigella boydii serotype 18 (strain CDC 3083-94 / BS512).